The following is a 1228-amino-acid chain: P3N-PIPO polyprotein (1228 aa).

A Peptidase S30 domain is found at 408-547; that stretch reads IVGNSKINYI…RSVYAKMDQY (140 aa). Catalysis depends on for P1 proteinase activity residues histidine 456, aspartate 465, and serine 499. An Involved in interaction with stylet and aphid transmission motif is present at residues 598 to 601; it reads KITC. Positions 856–858 match the Involved in virions binding and aphid transmission motif; that stretch reads PTK. The region spanning 882–1004 is the Peptidase C6 domain; the sequence is MYIAKKGYCY…DSEMKHYIVG (123 aa). Residues cysteine 890 and histidine 963 each act as for helper component proteinase activity in the active site.

It belongs to the potyviridae P3N-PIPO polyprotein family. In terms of assembly, interacts (via PIPO domain) with host PCaP1 protein; this interaction may help to anchor the movement complex to the plasma membrane from which the complex could move to the plasmodesmata. Potyviral RNA is expressed as two polyproteins which undergo post-translational proteolytic processing. Genome polyprotein is processed by NIa-pro, P1 and HC-pro proteinases resulting in the production of at least ten individual proteins. P3N-PIPO is cleaved by P1 and HC-pro proteinases resulting in the production of three individual proteins. The P1 proteinase and the HC-pro cleave only their respective C-termini autocatalytically.

The protein resides in the host cell junction. It localises to the host plasmodesma. It carries out the reaction Hydrolyzes a Gly-|-Gly bond at its own C-terminus, commonly in the sequence -Tyr-Xaa-Val-Gly-|-Gly, in the processing of the potyviral polyprotein.. Functionally, required for aphid transmission and also has proteolytic activity. Only cleaves a Gly-Gly dipeptide at its own C-terminus. Interacts with virions and aphid stylets. Acts as a suppressor of RNA-mediated gene silencing, also known as post-transcriptional gene silencing (PTGS), a mechanism of plant viral defense that limits the accumulation of viral RNAs. May have RNA-binding activity. Allows efficient cell to cell propagation, by bypassing the host cell wall barrier. Transports viral genome to neighboring plant cells directly through plasmosdesmata, without any budding. This is P3N-PIPO polyprotein from Carica papaya (Papaya).